Consider the following 283-residue polypeptide: Diaminopimelate epimerase (283 aa).

Residues Asn-13, Gln-45, and Asn-65 each contribute to the substrate site. Cys-74 functions as the Proton donor in the catalytic mechanism. Residues 75–76 (GN), Asn-156, Asn-190, and 208–209 (ER) each bind substrate. Catalysis depends on Cys-217, which acts as the Proton acceptor. Residue 218 to 219 (GS) participates in substrate binding.

The protein belongs to the diaminopimelate epimerase family. As to quaternary structure, homodimer.

The protein resides in the cytoplasm. It catalyses the reaction (2S,6S)-2,6-diaminopimelate = meso-2,6-diaminopimelate. The protein operates within amino-acid biosynthesis; L-lysine biosynthesis via DAP pathway; DL-2,6-diaminopimelate from LL-2,6-diaminopimelate: step 1/1. Functionally, catalyzes the stereoinversion of LL-2,6-diaminopimelate (L,L-DAP) to meso-diaminopimelate (meso-DAP), a precursor of L-lysine and an essential component of the bacterial peptidoglycan. This is Diaminopimelate epimerase from Bartonella henselae (strain ATCC 49882 / DSM 28221 / CCUG 30454 / Houston 1) (Rochalimaea henselae).